The sequence spans 120 residues: Large ribosomal subunit protein uL22 (120 aa).

Belongs to the universal ribosomal protein uL22 family. In terms of assembly, part of the 50S ribosomal subunit.

Functionally, this protein binds specifically to 23S rRNA; its binding is stimulated by other ribosomal proteins, e.g. L4, L17, and L20. It is important during the early stages of 50S assembly. It makes multiple contacts with different domains of the 23S rRNA in the assembled 50S subunit and ribosome. In terms of biological role, the globular domain of the protein is located near the polypeptide exit tunnel on the outside of the subunit, while an extended beta-hairpin is found that lines the wall of the exit tunnel in the center of the 70S ribosome. The chain is Large ribosomal subunit protein uL22 from Corynebacterium diphtheriae (strain ATCC 700971 / NCTC 13129 / Biotype gravis).